The following is a 229-amino-acid chain: Enolase-phosphatase E1 (229 aa).

It belongs to the HAD-like hydrolase superfamily. MasA/MtnC family. As to quaternary structure, monomer. Mg(2+) serves as cofactor.

The catalysed reaction is 5-methylsulfanyl-2,3-dioxopentyl phosphate + H2O = 1,2-dihydroxy-5-(methylsulfanyl)pent-1-en-3-one + phosphate. It participates in amino-acid biosynthesis; L-methionine biosynthesis via salvage pathway; L-methionine from S-methyl-5-thio-alpha-D-ribose 1-phosphate: step 3/6. It functions in the pathway amino-acid biosynthesis; L-methionine biosynthesis via salvage pathway; L-methionine from S-methyl-5-thio-alpha-D-ribose 1-phosphate: step 4/6. Functionally, bifunctional enzyme that catalyzes the enolization of 2,3-diketo-5-methylthiopentyl-1-phosphate (DK-MTP-1-P) into the intermediate 2-hydroxy-3-keto-5-methylthiopentenyl-1-phosphate (HK-MTPenyl-1-P), which is then dephosphorylated to form the acireductone 1,2-dihydroxy-3-keto-5-methylthiopentene (DHK-MTPene). This Yersinia pseudotuberculosis serotype IB (strain PB1/+) protein is Enolase-phosphatase E1.